A 74-amino-acid polypeptide reads, in one-letter code: Putative defensin-like protein 128 (74 aa).

The signal sequence occupies residues 1-24 (MSKLTNVVIFIVFFLGMMAKETQG). 4 disulfides stabilise this stretch: Cys28/Cys72, Cys37/Cys56, Cys42/Cys66, and Cys46/Cys68.

It belongs to the DEFL family.

The protein resides in the secreted. The polypeptide is Putative defensin-like protein 128 (LCR8) (Arabidopsis thaliana (Mouse-ear cress)).